The following is a 324-amino-acid chain: Hairy/enhancer-of-split related with YRPW motif protein 2 (324 aa).

The disordered stretch occupies residues 1 to 34; the sequence is MKRPCEDSTSDSDMDETIDVGSENNYSGQSNGSF. Residues 8 to 18 show a composition bias toward acidic residues; it reads STSDSDMDETI. Residues 22–34 show a composition bias toward polar residues; the sequence is SENNYSGQSNGSF. Residues 48–103 form the bHLH domain; the sequence is ARKKRRGIIEKRRRDRINNSLSELRRLVPTAFEKQGSAKLEKAEILQMTVDHLKML. The Orange domain occupies 122–157; the sequence is LSIGFRECLTEVARYLSSVEGLDSSDPLRVRLVSHL. Low complexity predominate over residues 294–311; sequence SSSVSTSTTSQQSSGSSS. The segment at 294–324 is disordered; sequence SSSVSTSTTSQQSSGSSSKPYRPWGTEVGAF. The YRPW motif motif lies at 314–317; it reads YRPW.

The protein belongs to the HEY family.

The protein resides in the nucleus. In terms of biological role, transcriptional repressor. Downstream effector of Notch signaling which regulates cell fate choice in angioblasts. Represses the venous cell fate, thereby promoting the arterial cell fate and aorta formation. The sequence is that of Hairy/enhancer-of-split related with YRPW motif protein 2 (hey2) from Danio rerio (Zebrafish).